Reading from the N-terminus, the 131-residue chain is Small ribosomal subunit protein eS17A (131 aa).

It belongs to the eukaryotic ribosomal protein eS17 family. As to quaternary structure, component of the small ribosomal subunit (SSU). Mature yeast ribosomes consist of a small (40S) and a large (60S) subunit. The 40S small subunit contains 1 molecule of ribosomal RNA (18S rRNA) and at least 33 different proteins. The large 60S subunit contains 3 rRNA molecules (25S, 5.8S and 5S rRNA) and at least 46 different proteins.

Its subcellular location is the cytoplasm. In terms of biological role, component of the ribosome, a large ribonucleoprotein complex responsible for the synthesis of proteins in the cell. The small ribosomal subunit (SSU) binds messenger RNAs (mRNAs) and translates the encoded message by selecting cognate aminoacyl-transfer RNA (tRNA) molecules. The large subunit (LSU) contains the ribosomal catalytic site termed the peptidyl transferase center (PTC), which catalyzes the formation of peptide bonds, thereby polymerizing the amino acids delivered by tRNAs into a polypeptide chain. The nascent polypeptides leave the ribosome through a tunnel in the LSU and interact with protein factors that function in enzymatic processing, targeting, and the membrane insertion of nascent chains at the exit of the ribosomal tunnel. This is Small ribosomal subunit protein eS17A (rps1701) from Schizosaccharomyces pombe (strain 972 / ATCC 24843) (Fission yeast).